A 525-amino-acid polypeptide reads, in one-letter code: Glutamate synthase large subunit-like protein YerD (525 aa).

A helical transmembrane segment spans residues 4–24 (IIIALIAFIIGIIAIPIVLFA).

This sequence belongs to the glutamate synthase family.

Its subcellular location is the cell membrane. This Bacillus subtilis (strain 168) protein is Glutamate synthase large subunit-like protein YerD (yerD).